Reading from the N-terminus, the 451-residue chain is Aminodeoxychorismate synthase component 1 (451 aa).

Residues Ser34, His41–Phe44, and Pro238–Ser240 contribute to the L-tryptophan site. Residue Glu256 is the Proton donor of the active site. Lys272 functions as the N6-(4-deoxychorismate)-lysine intermediate in the catalytic mechanism.

The protein belongs to the anthranilate synthase component I family. In terms of assembly, monomer. Heterodimer consisting of two non-identical subunits: a glutamine amidotransferase subunit (PabA) and a aminodeoxychorismate synthase subunit (PabB). Mg(2+) serves as cofactor.

It catalyses the reaction chorismate + L-glutamine = 4-amino-4-deoxychorismate + L-glutamate. It participates in cofactor biosynthesis; tetrahydrofolate biosynthesis; 4-aminobenzoate from chorismate: step 1/2. Part of a heterodimeric complex that catalyzes the two-step biosynthesis of 4-amino-4-deoxychorismate (ADC), a precursor of p-aminobenzoate (PABA) and tetrahydrofolate. In the first step, a glutamine amidotransferase (PabA) generates ammonia as a substrate that, along with chorismate, is used in the second step, catalyzed by aminodeoxychorismate synthase (PabB) to produce ADC. This Klebsiella aerogenes (Enterobacter aerogenes) protein is Aminodeoxychorismate synthase component 1 (pabB).